The sequence spans 810 residues: MERAKMAEESLETAAEHERILREIESTDTACIGPTLRSVYDGEEHGRFMEKLETRIRNHDREIEKMCNFHYQGFVDSITELLKVRGEAQKLKNQVTDTNRKLQHEGKELVIAMEELKQCRLQQRNISATVDKLMLCLPVLEMYSKLRDQMKTKRHYPALKTLEHLEHTYLPQVSHYRFCKVMVDNIPKLREEIKDVSMSDLKDFLESIRKHSDKIGETAMKQAQQQRNLDNIVLQQPRIGSKRKSKKDVYTIFDAEVESTSPKSEQDSGILDVEDEEDDEEVPGAQDLVDFSPVYRCLHIYSVLGARETFENYYRKQRRKQARLVLQPPSNMHETLDGYRKYFNQIVGFFVVEDHILHTTQGLVNRAYIDELWEMALSKTIAALRTHSSYCSDPNLVLDLKNLIVLFADTLQVYGFPVNQLFDMLLEIRDQYSETLLKKWAGVFRNILDSDNYSPIPVTSEETYKKVVGQFPFQDIELEKQPFPKKFPFSEFVPKVYNQIKEFIYACLKFSEDLHLSSTEVDDMIRKSTNLLLTRTLSNSLQNVIKRKNIGLTELVQIIINTTHLEKSCKYLEEFITNITNVLPETVHTTKLYGTTTFKDARHAAEEEIYTNLNQKIDQFLQLADYDWMTGDLDNKASDYLVDLIAFLRSTFAVFTHLPGKVAQTACMSACKHLATSLMQLLLEAEVRQLTLGALQQFNLDVRECEQFARSGPVPGFQEDTLQLAFIDLRQLLDLFIQWDWSTYLADYGQPNCKYLRVNPVTALTLLEKMKDTSRKNNMFAQFRKNERDKQKLIDTVAKQLRGLISSHHS.

Residues 79 to 118 (TELLKVRGEAQKLKNQVTDTNRKLQHEGKELVIAMEELKQ) adopt a coiled-coil conformation. The segment at 258-282 (ESTSPKSEQDSGILDVEDEEDDEEV) is disordered. Residues 272–282 (DVEDEEDDEEV) are compositionally biased toward acidic residues.

It belongs to the SEC15 family. As to quaternary structure, the exocyst complex is composed of SEC3, SEC5, SEC6, SEC8, SEC10, SEC15, EXO70 and EXO84.

Component of the exocyst complex involved in the docking of exocytic vesicles with fusion sites on the plasma membrane. In Mus musculus (Mouse), this protein is Exocyst complex component 6B (Exoc6b).